Here is a 164-residue protein sequence, read N- to C-terminus: Putative 4-hydroxy-4-methyl-2-oxoglutarate aldolase (164 aa).

Substrate is bound by residues 74-77 (GGNL) and arginine 96. Aspartate 97 is an a divalent metal cation binding site.

It belongs to the class II aldolase/RraA-like family. As to quaternary structure, homotrimer. A divalent metal cation is required as a cofactor.

It carries out the reaction 4-hydroxy-4-methyl-2-oxoglutarate = 2 pyruvate. It catalyses the reaction oxaloacetate + H(+) = pyruvate + CO2. In terms of biological role, catalyzes the aldol cleavage of 4-hydroxy-4-methyl-2-oxoglutarate (HMG) into 2 molecules of pyruvate. Also contains a secondary oxaloacetate (OAA) decarboxylase activity due to the common pyruvate enolate transition state formed following C-C bond cleavage in the retro-aldol and decarboxylation reactions. In Thermus thermophilus (strain ATCC BAA-163 / DSM 7039 / HB27), this protein is Putative 4-hydroxy-4-methyl-2-oxoglutarate aldolase.